A 249-amino-acid chain; its full sequence is Aspartate/glutamate leucyltransferase (249 aa).

The protein belongs to the R-transferase family. Bpt subfamily.

The protein resides in the cytoplasm. It carries out the reaction N-terminal L-glutamyl-[protein] + L-leucyl-tRNA(Leu) = N-terminal L-leucyl-L-glutamyl-[protein] + tRNA(Leu) + H(+). The catalysed reaction is N-terminal L-aspartyl-[protein] + L-leucyl-tRNA(Leu) = N-terminal L-leucyl-L-aspartyl-[protein] + tRNA(Leu) + H(+). In terms of biological role, functions in the N-end rule pathway of protein degradation where it conjugates Leu from its aminoacyl-tRNA to the N-termini of proteins containing an N-terminal aspartate or glutamate. In Brucella suis (strain ATCC 23445 / NCTC 10510), this protein is Aspartate/glutamate leucyltransferase.